A 604-amino-acid polypeptide reads, in one-letter code: MSEVIGIKHNQHIYDLCTADELGITGDSISFDNSQESLAIIRHSCAHLMAQAIKILYPEAQFFVGPVVDEGFYYDFKVNTKISEEDLLVIEAKMKEIAKNAYPITKITLSRKEAQARFAHDELKVAVMSRIPDEKLSIYTQGDFEDLCRGPHLPNTKLLEHFKLTKIAGAYLGGDENAQMLIRIYGIAFADKQSLKDYLFTLEEAKKRDHRKLGQEMGLFTFDEEIGAGLPIWLPKGARLRHNIEHLLTQALKERGYEPVRGPEILKSDVWKKSGHYSNYKENMYFTIIDEQEYGIKPMNCVGHIKVYQSSPRSYRELPLRFYEYGIVHRHERSGVLHGLLRVREFTQDDAHIFCMTSQIKSEVNQILDFTKGIMNAFGFHYEMELSTRPQKSIGNDEVWENATAALKSALEENHISYQIDEGGGAFYGPKIDIKITDALKRKWQCGTIQIDMNLPERFELSYTDEHNVQVQPVMIHRAILGSFERFVAILTEHFGGEFPLFIAPTQVILIPIGEAQLEYARILRDKIITQSGAYAELMDKNESLSKKIRLAEKQRVPLIVVIGAKEVESKILAIRDRREKSQYELPEEAFIATLKTKIGEVSF.

The tract at residues 209–500 (DHRKLGQEMG…LTEHFGGEFP (292 aa)) is catalytic. Cys-301, His-352, and His-477 together coordinate Zn(2+).

Belongs to the class-II aminoacyl-tRNA synthetase family. In terms of assembly, homodimer. The cofactor is Zn(2+).

The protein resides in the cytoplasm. It catalyses the reaction tRNA(Thr) + L-threonine + ATP = L-threonyl-tRNA(Thr) + AMP + diphosphate + H(+). Catalyzes the attachment of threonine to tRNA(Thr) in a two-step reaction: L-threonine is first activated by ATP to form Thr-AMP and then transferred to the acceptor end of tRNA(Thr). Also edits incorrectly charged L-seryl-tRNA(Thr). This Helicobacter hepaticus (strain ATCC 51449 / 3B1) protein is Threonine--tRNA ligase.